A 417-amino-acid polypeptide reads, in one-letter code: Glutamyl-tRNA reductase (417 aa).

Residues threonine 49–arginine 52, serine 109, glutamate 114–glutamine 116, and glutamine 120 each bind substrate. The active-site Nucleophile is cysteine 50. Glycine 189–glycine 194 lines the NADP(+) pocket.

The protein belongs to the glutamyl-tRNA reductase family. As to quaternary structure, homodimer.

It carries out the reaction (S)-4-amino-5-oxopentanoate + tRNA(Glu) + NADP(+) = L-glutamyl-tRNA(Glu) + NADPH + H(+). It functions in the pathway porphyrin-containing compound metabolism; protoporphyrin-IX biosynthesis; 5-aminolevulinate from L-glutamyl-tRNA(Glu): step 1/2. Its function is as follows. Catalyzes the NADPH-dependent reduction of glutamyl-tRNA(Glu) to glutamate 1-semialdehyde (GSA). This Streptococcus sanguinis (strain SK36) protein is Glutamyl-tRNA reductase.